A 637-amino-acid polypeptide reads, in one-letter code: MATEKPKKRSPRAWDTLNPPLSEWIRDAVATMGFDQMTPVQAATLPHFMGNKDVVVEAVTGSGKTLAFLIPLVQKLLRLSEPTKKHHVAAIIVSPTRELAAQIHTVLMKLLQFHEASAEILPHLKDDDEKRPFTTVPAIVPQLLVGGTTTTVQDLRFFLRHSPNVLISSPGRLVELMSSPHVHCPQSSFEVLVLDEADRLLDLGFKPDLQKILSHLPKQRRTGLFSASVSEAVGEIIRVGLRNPVKIEVKVKIKGGGILEDRKTPASLQMTYMVKPASQKLPALAELLRQLPVRPQRSIVFLSTCAAVDYFQHILPLILPEGFALVPLHGKHAAKVREKNFNKFLSSVSPTILLTTDLAARGLDIPQVDLVVQIDAPSDPKVFIHRSGRAGRAGRKGLAVVMLHPGREEDYVQFLEIRKTPIAPLEKPTITTSEDDAAEFAKKTRDFVLTDRGLFDKAQKAFVSWARSYGAHQATSIFRAADLDWADLGNAWGLLRMPRMPELKGWTGDKMCGLEIDWDNYAYKEKTREQQRKVALEEEKSGVKKQDKSEEFKRKRKNNEAWSAKHEKEDDRVERREKRRKRRDAEATSKMTDDEKVKQMELNDLIAEVRRQNREKAAAEAAAAKQEKDGEFKGFDD.

The Q motif signature appears at 14–42 (WDTLNPPLSEWIRDAVATMGFDQMTPVQA). The Helicase ATP-binding domain maps to 45–247 (LPHFMGNKDV…RVGLRNPVKI (203 aa)). 58–65 (AVTGSGKT) serves as a coordination point for ATP. A DEAD box motif is present at residues 195–198 (DEAD). Residues 283 to 438 (ALAELLRQLP…TITTSEDDAA (156 aa)) enclose the Helicase C-terminal domain. Residues 524–631 (KEKTREQQRK…AAAKQEKDGE (108 aa)) adopt a coiled-coil conformation. Composition is skewed to basic and acidic residues over residues 535–553 (ALEE…EEFK), 563–576 (SAKH…VERR), 583–618 (RDAE…EKAA), and 625–637 (KQEK…GFDD). Residues 535-637 (ALEEEKSGVK…KDGEFKGFDD (103 aa)) are disordered.

The protein belongs to the DEAD box helicase family. DDX55/SPB4 subfamily. Component of pre-60S ribosomal complexes.

The protein resides in the nucleus. Its subcellular location is the nucleolus. The enzyme catalyses ATP + H2O = ADP + phosphate + H(+). ATP-binding RNA helicase involved in the biogenesis of 60S ribosomal subunits. Binds 90S pre-ribosomal particles and dissociates from pre-60S ribosomal particles after processing of 27SB pre-rRNA. Required for the normal formation of 18S rRNA through the processing of pre-rRNAs at sites A0, A1 and A2, and the normal formation of 25S and 5.8S rRNAs through the processing of pre-rRNAs at sites C1 and C2. This Gibberella zeae (strain ATCC MYA-4620 / CBS 123657 / FGSC 9075 / NRRL 31084 / PH-1) (Wheat head blight fungus) protein is ATP-dependent rRNA helicase SPB4.